Reading from the N-terminus, the 373-residue chain is Probable tRNA sulfurtransferase (373 aa).

Residues 54–158 (NKNIEELSKV…NDVAYFYYKI (105 aa)) form the THUMP domain. ATP contacts are provided by residues 176 to 177 (LF), 201 to 202 (NF), lysine 256, glycine 278, and glutamine 287.

The protein belongs to the ThiI family.

It is found in the cytoplasm. It catalyses the reaction [ThiI sulfur-carrier protein]-S-sulfanyl-L-cysteine + a uridine in tRNA + 2 reduced [2Fe-2S]-[ferredoxin] + ATP + H(+) = [ThiI sulfur-carrier protein]-L-cysteine + a 4-thiouridine in tRNA + 2 oxidized [2Fe-2S]-[ferredoxin] + AMP + diphosphate. It carries out the reaction [ThiS sulfur-carrier protein]-C-terminal Gly-Gly-AMP + S-sulfanyl-L-cysteinyl-[cysteine desulfurase] + AH2 = [ThiS sulfur-carrier protein]-C-terminal-Gly-aminoethanethioate + L-cysteinyl-[cysteine desulfurase] + A + AMP + 2 H(+). It functions in the pathway cofactor biosynthesis; thiamine diphosphate biosynthesis. Functionally, catalyzes the ATP-dependent transfer of a sulfur to tRNA to produce 4-thiouridine in position 8 of tRNAs, which functions as a near-UV photosensor. Also catalyzes the transfer of sulfur to the sulfur carrier protein ThiS, forming ThiS-thiocarboxylate. This is a step in the synthesis of thiazole, in the thiamine biosynthesis pathway. The sulfur is donated as persulfide by IscS. The polypeptide is Probable tRNA sulfurtransferase (Saccharolobus islandicus (strain Y.N.15.51 / Yellowstone #2) (Sulfolobus islandicus)).